The following is a 635-amino-acid chain: Threonine--tRNA ligase (635 aa).

The TGS domain maps to methionine 1–threonine 61. The interval aspartate 242–proline 533 is catalytic. The Zn(2+) site is built by cysteine 333, histidine 384, and histidine 510.

It belongs to the class-II aminoacyl-tRNA synthetase family. Homodimer. Zn(2+) serves as cofactor.

The protein localises to the cytoplasm. The enzyme catalyses tRNA(Thr) + L-threonine + ATP = L-threonyl-tRNA(Thr) + AMP + diphosphate + H(+). In terms of biological role, catalyzes the attachment of threonine to tRNA(Thr) in a two-step reaction: L-threonine is first activated by ATP to form Thr-AMP and then transferred to the acceptor end of tRNA(Thr). Also edits incorrectly charged L-seryl-tRNA(Thr). This chain is Threonine--tRNA ligase, found in Paraburkholderia xenovorans (strain LB400).